Consider the following 458-residue polypeptide: MALWGGRFTQAADQRFKQFNDSLRFDYRLAEQDIVGSVAWSKALVTVGVLTADEQRQLEEALNVLLEEVRANPQQILQSDAEDIHSWVEGKLIDKVGQLGKKLHTGRSRNDQVATDLKLWCKETVRELLTANRQLQSALVETAQANQDAVMPGYTHLQRAQPVTFAHWCLAYVEMLARDESRLQDTLKRLDVSPLGCGALAGTAYEIDREQLAGWLGFTSATRNSLDSVSDRDHVLELLSDAAIGMVHLSRFAEDLIFFNSGEAGFVELSDRVTSGSSLMPQKKNPDALELIRGKCGRVQGALTGMMMTLKGLPLAYNKDMQEDKEGLFDALDTWLDCLHMAALVLDGIQVKRPRCQDAAQQGYANATELADYLVAKGVPFREAHHIVGEAVVEAIRQGKPLEALPLADLQKFSRVIGDDVYPILSLQSCLDKRAAKGGVSPLQVAQAINDAKARLAL.

The protein belongs to the lyase 1 family. Argininosuccinate lyase subfamily.

The protein resides in the cytoplasm. It catalyses the reaction 2-(N(omega)-L-arginino)succinate = fumarate + L-arginine. The protein operates within amino-acid biosynthesis; L-arginine biosynthesis; L-arginine from L-ornithine and carbamoyl phosphate: step 3/3. In Salmonella typhimurium (strain LT2 / SGSC1412 / ATCC 700720), this protein is Argininosuccinate lyase.